Consider the following 297-residue polypeptide: ATP phosphoribosyltransferase (297 aa).

The protein belongs to the ATP phosphoribosyltransferase family.

The protein resides in the cytoplasm. The catalysed reaction is 1-(5-phospho-beta-D-ribosyl)-ATP + diphosphate = 5-phospho-alpha-D-ribose 1-diphosphate + ATP. It participates in amino-acid biosynthesis; L-histidine biosynthesis; L-histidine from 5-phospho-alpha-D-ribose 1-diphosphate: step 1/9. Functionally, catalyzes the condensation of ATP and 5-phosphoribose 1-diphosphate to form N'-(5'-phosphoribosyl)-ATP (PR-ATP). Has a crucial role in the pathway because the rate of histidine biosynthesis seems to be controlled primarily by regulation of the enzymatic activity. This chain is ATP phosphoribosyltransferase (HIS1), found in Kluyveromyces lactis (strain ATCC 8585 / CBS 2359 / DSM 70799 / NBRC 1267 / NRRL Y-1140 / WM37) (Yeast).